Reading from the N-terminus, the 134-residue chain is DNA-binding protein inhibitor ID-2 (134 aa).

Ser14 and Ser25 each carry phosphoserine. Positions 23–75 (SRSKTPVDDPMSLLYNMNDCYSKLKELVPSIPQNKKVSKMEILQHVIDYILDL) constitute a bHLH domain. The Nuclear export signal signature appears at 106 to 115 (LNTDISILSL).

In terms of assembly, interacts with GATA4 and NKX2-5. Interacts with NR0B2. Interacts with CLOCK and BMAL1. Interacts with IFI204. Interacts with NEDD9/HEF1. Interacts with ASB4; this interaction promotes ID2 proteasomal degradation. In terms of processing, ubiquitinated in a ASB4-depedent manner, leading to proteasomal degradation. Phosphorylated in vitro by CDK1, PKA and PKC. In terms of tissue distribution, highly expressed in early fetal tissues, including those of the central nervous system.

The protein localises to the cytoplasm. The protein resides in the nucleus. Its function is as follows. Transcriptional regulator (lacking a basic DNA binding domain) which negatively regulates the basic helix-loop-helix (bHLH) transcription factors by forming heterodimers and inhibiting their DNA binding and transcriptional activity. Implicated in regulating a variety of cellular processes, including cellular growth, senescence, differentiation, apoptosis, angiogenesis, and neoplastic transformation. Inhibits skeletal muscle and cardiac myocyte differentiation. Regulates the circadian clock by repressing the transcriptional activator activity of the CLOCK-BMAL1 heterodimer. Restricts the CLOCK and BMAL1 localization to the cytoplasm. Plays a role in both the input and output pathways of the circadian clock: in the input component, is involved in modulating the magnitude of photic entrainment and in the output component, contributes to the regulation of a variety of liver clock-controlled genes involved in lipid metabolism. This Homo sapiens (Human) protein is DNA-binding protein inhibitor ID-2 (ID2).